We begin with the raw amino-acid sequence, 279 residues long: HTH-type transcriptional regulator HdfR (279 aa).

Positions 1–58 (MDTELLKTFLEVSRTRHFGRAAESLYLTQSAVSFRIRQLENQLGVNLFTRHRNNIRLT) constitute an HTH lysR-type domain. Residues 18–37 (FGRAAESLYLTQSAVSFRIR) constitute a DNA-binding region (H-T-H motif).

It belongs to the LysR transcriptional regulatory family.

In terms of biological role, negatively regulates the transcription of the flagellar master operon flhDC by binding to the upstream region of the operon. In Escherichia fergusonii (strain ATCC 35469 / DSM 13698 / CCUG 18766 / IAM 14443 / JCM 21226 / LMG 7866 / NBRC 102419 / NCTC 12128 / CDC 0568-73), this protein is HTH-type transcriptional regulator HdfR.